A 241-amino-acid polypeptide reads, in one-letter code: Small ribosomal subunit protein uS3c (241 aa).

Belongs to the universal ribosomal protein uS3 family. As to quaternary structure, part of the 30S ribosomal subunit.

The protein resides in the plastid. The chain is Small ribosomal subunit protein uS3c (rps3) from Helicosporidium sp. subsp. Simulium jonesii (Green alga).